We begin with the raw amino-acid sequence, 415 residues long: Light-independent protochlorophyllide reductase subunit N (415 aa).

[4Fe-4S] cluster is bound by residues cysteine 16, cysteine 41, and cysteine 98.

It belongs to the BchN/ChlN family. In terms of assembly, protochlorophyllide reductase is composed of three subunits; BchL, BchN and BchB. Forms a heterotetramer of two BchB and two BchN subunits. [4Fe-4S] cluster serves as cofactor.

It catalyses the reaction chlorophyllide a + oxidized 2[4Fe-4S]-[ferredoxin] + 2 ADP + 2 phosphate = protochlorophyllide a + reduced 2[4Fe-4S]-[ferredoxin] + 2 ATP + 2 H2O. It participates in porphyrin-containing compound metabolism; bacteriochlorophyll biosynthesis (light-independent). Its function is as follows. Component of the dark-operative protochlorophyllide reductase (DPOR) that uses Mg-ATP and reduced ferredoxin to reduce ring D of protochlorophyllide (Pchlide) to form chlorophyllide a (Chlide). This reaction is light-independent. The NB-protein (BchN-BchB) is the catalytic component of the complex. The protein is Light-independent protochlorophyllide reductase subunit N of Roseiflexus sp. (strain RS-1).